The primary structure comprises 180 residues: NAD(P)H-quinone oxidoreductase subunit I, chloroplastic (180 aa).

4Fe-4S ferredoxin-type domains lie at G55 to R84 and L95 to E124. Residues C64, C67, C70, C74, C104, C107, C110, and C114 each coordinate [4Fe-4S] cluster.

This sequence belongs to the complex I 23 kDa subunit family. NDH is composed of at least 16 different subunits, 5 of which are encoded in the nucleus. It depends on [4Fe-4S] cluster as a cofactor.

The protein localises to the plastid. It localises to the chloroplast thylakoid membrane. It carries out the reaction a plastoquinone + NADH + (n+1) H(+)(in) = a plastoquinol + NAD(+) + n H(+)(out). The catalysed reaction is a plastoquinone + NADPH + (n+1) H(+)(in) = a plastoquinol + NADP(+) + n H(+)(out). In terms of biological role, NDH shuttles electrons from NAD(P)H:plastoquinone, via FMN and iron-sulfur (Fe-S) centers, to quinones in the photosynthetic chain and possibly in a chloroplast respiratory chain. The immediate electron acceptor for the enzyme in this species is believed to be plastoquinone. Couples the redox reaction to proton translocation, and thus conserves the redox energy in a proton gradient. The sequence is that of NAD(P)H-quinone oxidoreductase subunit I, chloroplastic from Zea mays (Maize).